The chain runs to 289 residues: AAQALGRALVSAKWLSEAVRAGRVGAGLRVLDASWYPPEERDARQEFKERHIPGASFFNIEECRDKSSPYDFMLPSEAHFADYVGRLGVSNDTHVVVYDGDELGTFYAPRAWWMFRAFGHREVSVLNGGFKNWVKEGHPVTAEPSQPAEAVFKAKLDKTLLKTFEQAMENVGSKKFQVVDSRPAGRFQGTELDQGLESGHIPGAVNMPFSTFLTESGHEKSIEEIQQMFREKKVDLSKPLTATCRKGVTACHIALAAYLCGKPDVAVYDGSWSEWFHRAPPQYKVTELK.

Residues 24–142 (VGAGLRVLDA…WVKEGHPVTA (119 aa)) enclose the Rhodanese 1 domain. The segment at 143-158 (EPSQPAEAVFKAKLDK) is hinge. Residues 172 to 284 (GSKKFQVVDS…WFHRAPPQYK (113 aa)) enclose the Rhodanese 2 domain. Arginine 186 contacts substrate. The active-site Cysteine persulfide intermediate is cysteine 244. Residue lysine 246 coordinates substrate.

In terms of assembly, monomer. Expressed in numerous tissues.

The protein localises to the mitochondrion matrix. The enzyme catalyses thiosulfate + hydrogen cyanide = thiocyanate + sulfite + 2 H(+). Together with MRPL18, acts as a mitochondrial import factor for the cytosolic 5S rRNA. Only the nascent unfolded cytoplasmic form is able to bind to the 5S rRNA. Formation of iron-sulfur complexes and cyanide detoxification. The protein is Thiosulfate sulfurtransferase (TST) of Gallus gallus (Chicken).